A 1551-amino-acid chain; its full sequence is Envelopment polyprotein (1551 aa).

The signal sequence occupies residues Met-1 to Thr-17. Residues Thr-18–Ala-546 are Lumenal-facing. The disordered stretch occupies residues Gly-24–Thr-66. Residues Asn-25 and Asn-30 are each glycosylated (N-linked (GlcNAc...) asparagine; by host). A compositionally biased stretch (low complexity) spans Ser-31 to Thr-66. N-linked (GlcNAc...) asparagine; by host glycans are attached at residues Asn-80, Asn-142, and Asn-413. The helical transmembrane segment at Leu-547–Leu-567 threads the bilayer. Topologically, residues Tyr-568 to Thr-675 are cytoplasmic. Residues Thr-676 to Pro-696 form a helical membrane-spanning segment. Residues Thr-697–Gln-704 are Lumenal-facing. A helical transmembrane segment spans residues Asp-705–Leu-725. Over Lys-726 to Gln-823 the chain is Cytoplasmic. A helical membrane pass occupies residues Leu-824 to Leu-844. Topologically, residues Thr-845–Ser-1451 are lumenal. 4 N-linked (GlcNAc...) asparagine; by host glycosylation sites follow: Asn-848, Asn-1201, Asn-1258, and Asn-1420. Cys-1023 and Cys-1216 are joined by a disulfide. The helical transmembrane segment at Ile-1452–Tyr-1472 threads the bilayer. At Gly-1473–Ala-1551 the chain is on the cytoplasmic side.

The protein belongs to the nairovirus envelope glycoprotein family. As to quaternary structure, heterodimer with glycoprotein C; in prefusion state. Heterodimer with glycoprotein N; in prefusion state. Homotrimeric; in postfusion state. Post-translationally, specific enzymatic cleavage by host MBTPS1/S1P/SKI-1 endopeptidase yield glycoprotein N. Specific enzymatic cleavages by host furin-like protease and MBTPS1/S1P endopeptidase yield GP38. Glycosylated.

Its subcellular location is the host endoplasmic reticulum membrane. It localises to the virion membrane. It is found in the host Golgi apparatus membrane. Its function is as follows. Glycoprotein N and glycoprotein C interact with each other and are present at the surface of the virion. Glycoprotein N probably locks the Gn-Gc complex in a prefusion state. Glycoprotein N and glycoprotein C are able to attach the virion to host cell receptors. This attachment induces virion internalization predominantly through clathrin-dependent endocytosis. Glycoprotein C and glycoprotein N interact with each other and are present at the surface of the virion. The spikes at the surface of the virion are formed by an N-terminal extension of glycoprotein C. Glycoprotein N and glycoprotein C are able to attach the virion to host cell receptors. This attachment induces virion internalization predominantly through clathrin-dependent endocytosis. Class II fusion protein that promotes fusion of viral membrane with host endosomal membrane after endocytosis of the virion. Exposure to potassium is necessary for the conformational change leading to fusion. The chain is Envelopment polyprotein (GP) from Amblyomma variegatum (Tropical bont tick).